The sequence spans 147 residues: Lysozyme C (147 aa).

Positions 1–18 (MKFFLILGFCLLPLIAQG) are cleaved as a signal peptide. In terms of domain architecture, C-type lysozyme spans 19–147 (KVFQRCELAA…VSQWIRGCRV (129 aa)). 4 disulfide bridges follow: cysteine 24–cysteine 145, cysteine 48–cysteine 133, cysteine 82–cysteine 98, and cysteine 94–cysteine 112. Active-site residues include glutamate 53 and aspartate 70. Position 119 (aspartate 119) interacts with substrate.

Belongs to the glycosyl hydrolase 22 family. In terms of assembly, monomer. Expressed in liver and ovary. Not expressed in bone marrow, lung, spleen, intestine or oviduct.

It localises to the secreted. The catalysed reaction is Hydrolysis of (1-&gt;4)-beta-linkages between N-acetylmuramic acid and N-acetyl-D-glucosamine residues in a peptidoglycan and between N-acetyl-D-glucosamine residues in chitodextrins.. Its function is as follows. Lysozymes have primarily a bacteriolytic function; those in tissues and body fluids are associated with the monocyte-macrophage system and enhance the activity of immunoagents. Has bacteriolytic activity against M.luteus. This Dromaius novaehollandiae (Emu) protein is Lysozyme C.